Here is a 601-residue protein sequence, read N- to C-terminus: Replication protein A 70 kDa DNA-binding subunit (601 aa).

The tract at residues methionine 107–valine 172 is disordered. Residues alanine 124–proline 135 show a composition bias toward low complexity. Polar residues predominate over residues glutamine 137–serine 153. Residues tryptophan 184–asparagine 268 constitute a DNA-binding region (OB). Position 370 is a phosphoserine (serine 370). The segment at cysteine 466–cysteine 488 adopts a C4-type zinc-finger fold.

Belongs to the replication factor A protein 1 family. In terms of assembly, component of the heterotrimeric canonical replication protein A complex (RPA).

It localises to the nucleus. The protein localises to the PML body. Its function is as follows. As part of the heterotrimeric replication protein A complex (RPA/RP-A), binds and stabilizes single-stranded DNA intermediates, that form during DNA replication or upon DNA stress. It prevents their reannealing and in parallel, recruits and activates different proteins and complexes involved in DNA metabolism. Thereby, it plays an essential role both in DNA replication and the cellular response to DNA damage. The polypeptide is Replication protein A 70 kDa DNA-binding subunit (rpa1) (Danio rerio (Zebrafish)).